Here is a 170-residue protein sequence, read N- to C-terminus: Cathelicidin antimicrobial peptide (170 aa).

A signal peptide spans 1–30 (MKTQRDGHSLGRWSLVLLLLGLVMPLAIVA). The propeptide at 31–131 (QVLSYKEAVL…DISCDKDNKR (101 aa)) is cathelin-like domain (CLD). Cystine bridges form between Cys-86/Cys-97 and Cys-108/Cys-125. An active core region spans residues 150–162 (FKRIVQRIKDFLR).

It belongs to the cathelicidin family. As to quaternary structure, monomer, homodimer or homotrimer (in vitro). Oligomerizes as tetra- or hexamer in solution (in vitro). Proteolytically cleaved by proteinase PRTN3 into antibacterial peptide LL-37. Proteolytically cleaved by cathepsin CTSG and neutrophil elastase ELANE. Post-translationally, resistant to proteolytic degradation in solution, and when bound to both zwitterionic (mimicking mammalian membranes) and negatively charged membranes (mimicking bacterial membranes). In terms of processing, after secretion onto the skin surface, the CAMP gene product is processed by a serine protease-dependent mechanism into multiple novel antimicrobial peptides distinct from and shorter than cathelicidin LL-37. These peptides show enhanced antimicrobial action, acquiring the ability to kill skin pathogens such as S.aureus, E.coli and C.albicans. These peptides have lost the ability to stimulate CXCL8/IL8 release from keratinocytes. The peptides act synergistically, killing bacteria at lower concentrations when present together, and maintain activity at increased salt condition.

The protein resides in the secreted. It is found in the vesicle. Antimicrobial protein that is an integral component of the innate immune system. Binds to bacterial lipopolysaccharides (LPS). Acts via neutrophil N-formyl peptide receptors to enhance the release of CXCL2. Postsecretory processing generates multiple cathelicidin antimicrobial peptides with various lengths which act as a topical antimicrobial defense in sweat on skin. The unprocessed precursor form, cathelicidin antimicrobial peptide, inhibits the growth of Gram-negative E.coli and E.aerogenes with efficiencies comparable to that of the mature peptide LL-37 (in vitro). In terms of biological role, antimicrobial peptide that is an integral component of the innate immune system. Binds to bacterial lipopolysaccharides (LPS). Causes membrane permeabilization by forming transmembrane pores (in vitro). Causes lysis of E.coli. Exhibits antimicrobial activity against Gram-negative bacteria such as P.aeruginosa, S.typhimurium, E.aerogenes, E.coli and P.syringae, Gram-positive bacteria such as L.monocytogenes, S.epidermidis, S.pyogenes and S.aureus, as well as vancomycin-resistant enterococci (in vitro). Exhibits antimicrobial activity against methicillin-resistant S.aureus, P.mirabilis, and C.albicans in low-salt media, but not in media containing 100 mM NaCl (in vitro). Forms chiral supramolecular assemblies with quinolone signal (PQS) molecules of P.aeruginosa, which may lead to interference of bacterial quorum signaling and perturbance of bacterial biofilm formation. May form supramolecular fiber-like assemblies on bacterial membranes. Induces cytokine and chemokine producation as well as TNF/TNFA and CSF2/GMCSF production in normal human keratinocytes. Exhibits hemolytic activity against red blood cells. Its function is as follows. Exhibits antimicrobial activity against E.coli and B.megaterium (in vitro). The chain is Cathelicidin antimicrobial peptide from Pan troglodytes (Chimpanzee).